A 114-amino-acid chain; its full sequence is Pole-localizer protein TmaR (114 aa).

Residues 70 to 111 are a coiled coil; it reads RDDYESRVDDYTIRNAELSKQRREASTKMKEQKKAHAELLKN. Residues 89-114 form a disordered region; that stretch reads KQRREASTKMKEQKKAHAELLKNAEK.

The protein belongs to the pole-localizer TmaR family.

It is found in the cytoplasm. Its function is as follows. Pole-localizer protein involved in the regulation of several cellular processes. This chain is Pole-localizer protein TmaR, found in Haemophilus influenzae (strain 86-028NP).